The sequence spans 86 residues: Small ribosomal subunit protein bS20 (86 aa).

Residues 1 to 25 (MANIKSQQKRNKTNERARLRNKSVK) are disordered.

This sequence belongs to the bacterial ribosomal protein bS20 family.

Binds directly to 16S ribosomal RNA. In Mycobacterium avium (strain 104), this protein is Small ribosomal subunit protein bS20.